The primary structure comprises 337 residues: Adenylosuccinate synthetase (337 aa).

GTP is bound by residues Gly12–Lys18 and Gly42–Thr44. Asp13 functions as the Proton acceptor in the catalytic mechanism. Residues Asp13 and Gly42 each coordinate Mg(2+). IMP is bound by residues Asp13–Lys16, Asn40–His43, Thr127, Arg141, Gln179, Thr194, and Arg256. The Proton donor role is filled by His43. Thr252–Arg258 is a substrate binding site. GTP contacts are provided by residues Arg258, Cys284–Asp286, and Ser324–Gly326.

Belongs to the adenylosuccinate synthetase family. As to quaternary structure, homodimer. It depends on Mg(2+) as a cofactor.

It is found in the cytoplasm. The enzyme catalyses IMP + L-aspartate + GTP = N(6)-(1,2-dicarboxyethyl)-AMP + GDP + phosphate + 2 H(+). The protein operates within purine metabolism; AMP biosynthesis via de novo pathway; AMP from IMP: step 1/2. Functionally, plays an important role in the de novo pathway of purine nucleotide biosynthesis. Catalyzes the first committed step in the biosynthesis of AMP from IMP. The chain is Adenylosuccinate synthetase from Methanococcus maripaludis (strain C6 / ATCC BAA-1332).